We begin with the raw amino-acid sequence, 287 residues long: Energy-coupling factor transporter ATP-binding protein EcfA (287 aa).

Residues 19-252 (FEIQNVSFSY…EEFLASSALD (234 aa)) form the ABC transporter domain. 52–59 (GHNGSGKS) lines the ATP pocket.

It belongs to the ABC transporter superfamily. Energy-coupling factor EcfA family. As to quaternary structure, forms a stable energy-coupling factor (ECF) transporter complex composed of 2 membrane-embedded substrate-binding proteins (S component), 2 ATP-binding proteins (A component) and 2 transmembrane proteins (T component).

Its subcellular location is the cell membrane. ATP-binding (A) component of a common energy-coupling factor (ECF) ABC-transporter complex. Unlike classic ABC transporters this ECF transporter provides the energy necessary to transport a number of different substrates. The polypeptide is Energy-coupling factor transporter ATP-binding protein EcfA (Malacoplasma penetrans (strain HF-2) (Mycoplasma penetrans)).